The following is a 208-amino-acid chain: MVNKRMQTLLTQLRQQGIRDERLLQAIEAVPRERFVDEALEHKAYENTALPIGSGQTISQPYMVARMTELLNLTPTSRVLEIGTGSGYQTAILAHLVQHVCSVERIKGLQWQAKRRLKQLDLHNVSTRHGDGWQGWASRGPFDAIIVTAAPPEIPPALMEQLDDGGILVLPVGEQAQTLKYIRRQGSEFVIDTVEAVRFVPLVKGELA.

Ser59 is a catalytic residue.

It belongs to the methyltransferase superfamily. L-isoaspartyl/D-aspartyl protein methyltransferase family.

It is found in the cytoplasm. It catalyses the reaction [protein]-L-isoaspartate + S-adenosyl-L-methionine = [protein]-L-isoaspartate alpha-methyl ester + S-adenosyl-L-homocysteine. Functionally, catalyzes the methyl esterification of L-isoaspartyl residues in peptides and proteins that result from spontaneous decomposition of normal L-aspartyl and L-asparaginyl residues. It plays a role in the repair and/or degradation of damaged proteins. This is Protein-L-isoaspartate O-methyltransferase from Serratia proteamaculans (strain 568).